A 147-amino-acid chain; its full sequence is uncharacterized protein (147 aa).

Residues 44–147 enclose the HTH LytTR-type domain; the sequence is LVGYIDKEIH…LKSIKERLSI (104 aa).

The protein localises to the cytoplasm. This is an uncharacterized protein from Staphylococcus aureus (strain MRSA252).